The sequence spans 123 residues: UPF0738 protein BCE33L1094 (123 aa).

This sequence belongs to the UPF0738 family.

The polypeptide is UPF0738 protein BCE33L1094 (Bacillus cereus (strain ZK / E33L)).